Reading from the N-terminus, the 929-residue chain is Isoleucine--tRNA ligase (929 aa).

Residues 58–68 (PYANGDIHIGH) carry the 'HIGH' region motif. Glu-563 contacts L-isoleucyl-5'-AMP. The 'KMSKS' region motif lies at 605–609 (KMSKS). Lys-608 provides a ligand contact to ATP. Residues Cys-892, Cys-895, Cys-912, and Cys-915 each contribute to the Zn(2+) site.

Belongs to the class-I aminoacyl-tRNA synthetase family. IleS type 1 subfamily. Monomer. Zn(2+) is required as a cofactor.

The protein localises to the cytoplasm. It catalyses the reaction tRNA(Ile) + L-isoleucine + ATP = L-isoleucyl-tRNA(Ile) + AMP + diphosphate. Its function is as follows. Catalyzes the attachment of isoleucine to tRNA(Ile). As IleRS can inadvertently accommodate and process structurally similar amino acids such as valine, to avoid such errors it has two additional distinct tRNA(Ile)-dependent editing activities. One activity is designated as 'pretransfer' editing and involves the hydrolysis of activated Val-AMP. The other activity is designated 'posttransfer' editing and involves deacylation of mischarged Val-tRNA(Ile). This is Isoleucine--tRNA ligase from Neisseria gonorrhoeae (strain ATCC 700825 / FA 1090).